The following is a 316-amino-acid chain: MKTRIFIGSSSEGIDVAKRIKTFFAPEYDCFLWTDDIFRNNESFLETLVKSASLFDFGFMVFSADDKTTIRDQHFESPRDNVLFEYGLFLGRVGLDRAFVIAETDAKIPTDMLGITQTRYETIVNSKGIKVATDSLESSLQKLKKQIDENVQLGHLGLLPSTVIAISYFEGFVKLAAEWLVENTPELMINNHKFNKASLKIVMPESLDTDIKRSAMMYYKRHGLEEARIDTKHRNYPIHFASKTEDGILEVYDMPTILTGIDKAIDMYFRVGHIGKTNEQKLAEDHEMNNFKRVLQLLINEDAFCRECVEIIEPQP.

The 118-residue stretch at 4–121 (RIFIGSSSEG…MLGITQTRYE (118 aa)) folds into the TIR domain. Positions 161–316 (STVIAISYFE…ECVEIIEPQP (156 aa)) are STING domain. The 3',3'-c-di-GMP site is built by Phe172, Pro237, and Asp253.

The protein in the C-terminal section; belongs to the bacterial STING family. As to quaternary structure, forms homodimers; in the presence of c-di-GMP forms filaments with an ordered array of parallel-stacked subunits.

It carries out the reaction NAD(+) + H2O = ADP-D-ribose + nicotinamide + H(+). With respect to regulation, NAD(+) hydrolase activity is strongly stimulated by c-di-GMP, weakly by 3'3'-cGAMP, very weakly by c-di-AMP but not at all by 2'3'-cGAMP. Self-association of TIR domains is required for NADase activity. Its function is as follows. Effector protein of a CBASS antiviral system with NAD(+) hydrolase activity. CBASS (cyclic oligonucleotide-based antiphage signaling system) provides immunity against bacteriophage. The CD-NTase protein synthesizes cyclic nucleotides in response to infection; these serve as specific second messenger signals. The signals activate a diverse range of effectors, leading to bacterial cell death and thus abortive phage infection. A type I-D(GG) CBASS system. In terms of biological role, binds c-di-GMP (synthesized by the cognate CdnE encoded upstream in the same operon) but not c-di-AMP, 2'-3'-cGAMP, 3'-3'-cGAMP or cUMP-AMP (tested without the N-terminal TIR domain). Upon activation by c-di-GMP forms filaments which hydrolyze NAD(+); filament formation is required for enzyme activation. The polypeptide is CD-NTase-associated protein 12 (Lachnospiraceae bacterium (strain RUG226)).